The following is a 53-amino-acid chain: Bowman-Birk type proteinase inhibitor 1 (53 aa).

Intrachain disulfides connect cysteine 9/cysteine 24, cysteine 12/cysteine 51, cysteine 14/cysteine 22, cysteine 31/cysteine 38, and cysteine 40/cysteine 48.

As to quaternary structure, dimer.

In terms of biological role, inhibits trypsin (IC(50)=6.20 nM), neutrophil elastase (ELANE) and, to a lesser extent, alpha-chymotrypsin (IC(50)=3.44 uM). This chain is Bowman-Birk type proteinase inhibitor 1, found in Lathyrus sativus (White vetchling).